Reading from the N-terminus, the 95-residue chain is Large ribosomal subunit protein bL25 (95 aa).

Belongs to the bacterial ribosomal protein bL25 family. In terms of assembly, part of the 50S ribosomal subunit; part of the 5S rRNA/L5/L18/L25 subcomplex. Contacts the 5S rRNA. Binds to the 5S rRNA independently of L5 and L18.

This is one of the proteins that binds to the 5S RNA in the ribosome where it forms part of the central protuberance. The chain is Large ribosomal subunit protein bL25 from Shewanella oneidensis (strain ATCC 700550 / JCM 31522 / CIP 106686 / LMG 19005 / NCIMB 14063 / MR-1).